Here is a 377-residue protein sequence, read N- to C-terminus: Alanine racemase (377 aa).

K37 serves as the catalytic Proton acceptor; specific for D-alanine. An N6-(pyridoxal phosphate)lysine modification is found at K37. R135 serves as a coordination point for substrate. The active-site Proton acceptor; specific for L-alanine is Y271. Residue M319 participates in substrate binding.

This sequence belongs to the alanine racemase family. The cofactor is pyridoxal 5'-phosphate.

It carries out the reaction L-alanine = D-alanine. Its pathway is amino-acid biosynthesis; D-alanine biosynthesis; D-alanine from L-alanine: step 1/1. Functionally, catalyzes the interconversion of L-alanine and D-alanine. May also act on other amino acids. In Helicobacter pylori (strain J99 / ATCC 700824) (Campylobacter pylori J99), this protein is Alanine racemase (alr).